The chain runs to 201 residues: NADH-quinone oxidoreductase subunit C (201 aa).

It belongs to the complex I 30 kDa subunit family. NDH-1 is composed of 14 different subunits. Subunits NuoB, C, D, E, F, and G constitute the peripheral sector of the complex.

It is found in the cell inner membrane. The catalysed reaction is a quinone + NADH + 5 H(+)(in) = a quinol + NAD(+) + 4 H(+)(out). Its function is as follows. NDH-1 shuttles electrons from NADH, via FMN and iron-sulfur (Fe-S) centers, to quinones in the respiratory chain. The immediate electron acceptor for the enzyme in this species is believed to be ubiquinone. Couples the redox reaction to proton translocation (for every two electrons transferred, four hydrogen ions are translocated across the cytoplasmic membrane), and thus conserves the redox energy in a proton gradient. This Ruegeria sp. (strain TM1040) (Silicibacter sp.) protein is NADH-quinone oxidoreductase subunit C.